The following is a 435-amino-acid chain: Histidine--tRNA ligase (435 aa).

It belongs to the class-II aminoacyl-tRNA synthetase family.

It is found in the cytoplasm. It catalyses the reaction tRNA(His) + L-histidine + ATP = L-histidyl-tRNA(His) + AMP + diphosphate + H(+). This is Histidine--tRNA ligase (hisS) from Aeropyrum pernix (strain ATCC 700893 / DSM 11879 / JCM 9820 / NBRC 100138 / K1).